We begin with the raw amino-acid sequence, 36 residues long: Photosystem I reaction center subunit VIII (36 aa).

The helical transmembrane segment at 1–21 threads the bilayer; it reads MITFSFPSIFVPLVGLVFPAI.

This sequence belongs to the PsaI family.

The protein localises to the plastid. Its subcellular location is the chloroplast thylakoid membrane. May help in the organization of the PsaL subunit. This chain is Photosystem I reaction center subunit VIII, found in Coffea arabica (Arabian coffee).